A 695-amino-acid polypeptide reads, in one-letter code: RING finger protein 145 (695 aa).

The next 13 helical transmembrane spans lie at 53–73, 77–97, 123–143, 146–166, 168–188, 225–245, 275–295, 316–336, 340–360, 384–404, 410–430, 460–480, and 482–502; these read YLAL…LTLP, LAKL…HQIS, FITA…VMKT, IWLF…IPIE, IVVI…YFLA, LVVP…QIYT, YSLL…LTLC, TEGV…LQVV, FLLS…MLEI, SLCL…CQFF, LLII…TLFV, LLEF…TVFG, and WTVM…WLRA. The RING-type; atypical zinc finger occupies 537 to 575; sequence CSICYQDMNSAVITPCSHFFHPGCLKKWLYVQETCPLCH. Positions 589–604 are enriched in polar residues; sequence SGSSTNPVVEQSANNP. Residues 589–608 form a disordered region; sequence SGSSTNPVVEQSANNPPQEP.

It is found in the membrane. The protein is RING finger protein 145 (rnf145) of Xenopus laevis (African clawed frog).